The primary structure comprises 1026 residues: MRFFALFIYRPVATILIAAAITLCGILGFRLLPVAPLPQVDFPVIMVSASLPGASPETMASSVATPLERSLGRIAGVNEMTSSSSLGSTRIILEFNFDRDINGAARDVQAAINAAQSLLPGGMPSRPTYRRANPSDAPIMILTLTSESWSQGKLYDFASTQLAQTIAQIDGVGDVDVGGSSLPAVRVGLNPQALFNQGVSLDEVREAIDSANVRRPQGAIEDSVHRWQIQTNDELKTAAEYQPLIIHYNNGAAVRLGDVASVTDSVQDVRNAGMTNAKPAILLMIRKLPEANIIQTVDGIRAKLPELRAMIPAAIDLQIAQDRSPTIRASLQEVEETLAISVALVILVVFLFLRSGRATLIPAVAVPVSLIGTFAAMYLCGFSLNNLSLMALTIATGFVVDDAIVVLENIARHLEAGMKPLQAALQGTREVGFTVISMSLSLVAVFLPLLLMGGLPGRLLREFAVTLSVAIGISLVVSLTLTPMMCGWMLKSSKPRTQLRKRGVGRLLVALQQGYGTSLKWVLNHTRLVGVVFLGTVALNIWLYIAIPKTFFPEQDTGVLMGGIQADQSISFQAMRGKLQDFMKIIRDDPAVNNVTGFTGGSRVNSGMMFITLKPRGERKETAQQVIDRLRVKLAKEPGARLFLMAVQDIRVGGRQANASYQYTLLSDSLAALREWEPKIRKALSALPQLADVNSDQQDNGAEMNLIYDRDTMSRLGIDVQAANSLLNNAFGQRQISTIYQPMNQYKVVMEVDPRYTQDISALEKMFVINRDGKAIPLSYFAQWRPANAPLSVNHQGLSAASTIAFNLPTGTSLSQATEAINRTMTQLGVPPTVRGSFSGTAQVFQQTMNSQLILIVAAIATVYIVLGILYESYVHPLTILSTLPSAGVGALLALELFNAPFSLIALIGIMLLIGIVKKNAIMMVDFALEAQRSGGLTPEQAIFQACLLRFRPIMMTTLAALFGALPLVLSDGDGSELRQPLGITIVGGLVMSQLLTLYTTPVVYLFFDRLRLRFSRKNSKPVVEI.

The next 11 membrane-spanning stretches (helical) occupy residues 15–35, 333–353, 360–380, 387–407, 431–451, 463–483, 528–548, 853–873, 897–917, 953–973, and 984–1004; these read ILIA…LPVA, EVEE…FLFL, LIPA…MYLC, LSLM…IVVL, VGFT…PLLL, FAVT…TLTP, LVGV…IAIP, LILI…LYES, LFNA…IGIV, PIMM…LSDG, and ITIV…TPVV.

This sequence belongs to the resistance-nodulation-cell division (RND) (TC 2.A.6) family. MdtC subfamily. As to quaternary structure, part of a tripartite efflux system composed of MdtA, MdtB and MdtC. MdtC forms a heteromultimer with MdtB.

It localises to the cell inner membrane. The sequence is that of Multidrug resistance protein MdtC from Salmonella heidelberg (strain SL476).